The chain runs to 424 residues: Probable threonylcarbamoyladenosine tRNA methylthiotransferase (424 aa).

The MTTase N-terminal domain occupies 4–115 (IRVYIETFGC…APQAVRAASN (112 aa)). 6 residues coordinate [4Fe-4S] cluster: C13, C48, C79, C150, C154, and C157. The Radical SAM core domain maps to 136 to 365 (RSNPLIHIIP…EELKMRITEE (230 aa)). The TRAM domain maps to 368-424 (RRLVGSFQEILVVERGRKGGFIGRTGSYIPVVTETGEPGSFRRVRIRDATGTYLLAD).

Belongs to the methylthiotransferase family. CDKAL1 subfamily. [4Fe-4S] cluster is required as a cofactor.

It catalyses the reaction N(6)-L-threonylcarbamoyladenosine(37) in tRNA + (sulfur carrier)-SH + AH2 + 2 S-adenosyl-L-methionine = 2-methylsulfanyl-N(6)-L-threonylcarbamoyladenosine(37) in tRNA + (sulfur carrier)-H + 5'-deoxyadenosine + L-methionine + A + S-adenosyl-L-homocysteine + 2 H(+). Catalyzes the methylthiolation of N6-threonylcarbamoyladenosine (t(6)A), leading to the formation of 2-methylthio-N6-threonylcarbamoyladenosine (ms(2)t(6)A) at position 37 in tRNAs that read codons beginning with adenine. The chain is Probable threonylcarbamoyladenosine tRNA methylthiotransferase from Methanothermobacter thermautotrophicus (strain ATCC 29096 / DSM 1053 / JCM 10044 / NBRC 100330 / Delta H) (Methanobacterium thermoautotrophicum).